A 533-amino-acid polypeptide reads, in one-letter code: MRKILPLRAWLAAGLILGSPFSHAASNLVFCSEGSPAGFDPAQYTTGTDYDATSVTLFNRLVQFERGGTRAIPALAESWDIGDDGKTYTFHLRKGVKFHSTDYFKPTREFNADDVLFTFERMLDKNHPFRKAYPTEFPYFTDMGLDKNIARVEKLDEHRVKFTLNEVDAAFIQNLAMDVASIQSAEYAGQLLEAGKPQQINQKPIGTGPFILSRYQKDAQIRFKGNKDYWKPEDVKIDNLIFSINTDAAVRAQKLKAGECQITLNPRPADLKALQEAANLKVPSQPGFNLGYIAYNVTHKPFDQLEVRQALDMAVNKQAIIDAVYQGAGQLAVNGMPPTQWSYDETIKDAPFDPAKARELLKKAGVAEGTEITLWAMPVQRPYNPNAKLMAEMIQADWAKIGIKARIVSYEWGEYIKRAHAGEHDAMLFGWTGDNGDPDNWLATLYGCDSINGNNVSKWCDAAYDKLVKAAKRVSDQDKRSELYKQAQHILKEQVPITPIAHSTVYQPMNKSVHDFKISPFSRNAFYGVTNQP.

The N-terminal stretch at 1 to 24 (MRKILPLRAWLAAGLILGSPFSHA) is a signal peptide.

The protein belongs to the bacterial solute-binding protein 5 family. In terms of assembly, the complex is composed of two ATP-binding proteins (DppD and DppF), two transmembrane proteins (DppB and DppC) and a solute-binding protein (DppA3). Five orthologous SBPs (DppA1-A5) are present in P.aeruginosa, which increases the substrate specificity of the DppBCDF transporter.

In terms of biological role, part of the ABC transporter DppABCDF involved in the uptake of various di/tripeptides. Prefers dipeptides with acidic residues at the C-terminal end. Involved in the uptake of phaseolotoxin, a toxic tripeptide inhibiting the enzyme ornithine carbamoyltransferase. This chain is Di/tripeptide-binding protein 3, found in Pseudomonas aeruginosa (strain UCBPP-PA14).